The primary structure comprises 115 residues: T cell receptor beta variable 7-4 (115 aa).

Positions 1 to 21 are cleaved as a signal peptide; the sequence is MGTRLLCWVVLGFLGTDHTGA. Residues 22 to 115 form the Ig-like domain; that stretch reads GVSQSPRYKV…SAVYLCASSL (94 aa). A disulfide bond links Cys-42 and Cys-111. The tract at residues 67–97 is disordered; that stretch reads YSQSDAQRDKSGRPSGRFSAERPERSVSTLK.

Alpha-beta TR is a heterodimer composed of an alpha and beta chain; disulfide-linked. The alpha-beta TR is associated with the transmembrane signaling CD3 coreceptor proteins to form the TR-CD3 (TcR or TCR). The assembly of alpha-beta TR heterodimers with CD3 occurs in the endoplasmic reticulum where a single alpha-beta TR heterodimer associates with one CD3D-CD3E heterodimer, one CD3G-CD3E heterodimer and one CD247 homodimer forming a stable octameric structure. CD3D-CD3E and CD3G-CD3E heterodimers preferentially associate with TR alpha and TR beta chains, respectively. The association of the CD247 homodimer is the last step of TcR assembly in the endoplasmic reticulum and is required for transport to the cell surface.

The protein localises to the cell membrane. In terms of biological role, v region of the variable domain of T cell receptor (TR) beta chain that participates in the antigen recognition. Alpha-beta T cell receptors are antigen specific receptors which are essential to the immune response and are present on the cell surface of T lymphocytes. Recognize peptide-major histocompatibility (MH) (pMH) complexes that are displayed by antigen presenting cells (APC), a prerequisite for efficient T cell adaptive immunity against pathogens. Binding of alpha-beta TR to pMH complex initiates TR-CD3 clustering on the cell surface and intracellular activation of LCK that phosphorylates the ITAM motifs of CD3G, CD3D, CD3E and CD247 enabling the recruitment of ZAP70. In turn ZAP70 phosphorylates LAT, which recruits numerous signaling molecules to form the LAT signalosome. The LAT signalosome propagates signal branching to three major signaling pathways, the calcium, the mitogen-activated protein kinase (MAPK) kinase and the nuclear factor NF-kappa-B (NF-kB) pathways, leading to the mobilization of transcription factors that are critical for gene expression and essential for T cell growth and differentiation. The T cell repertoire is generated in the thymus, by V-(D)-J rearrangement. This repertoire is then shaped by intrathymic selection events to generate a peripheral T cell pool of self-MH restricted, non-autoaggressive T cells. Post-thymic interaction of alpha-beta TR with the pMH complexes shapes TR structural and functional avidity. In Homo sapiens (Human), this protein is T cell receptor beta variable 7-4.